Reading from the N-terminus, the 153-residue chain is UPF0756 membrane protein lin1603 (153 aa).

4 helical membrane-spanning segments follow: residues 6-26 (MLFL…SLII), 54-74 (WGVT…QIGF), 80-100 (SFKS…SILA), and 117-137 (LVFG…GPVI).

This sequence belongs to the UPF0756 family.

It localises to the cell membrane. This is UPF0756 membrane protein lin1603 from Listeria innocua serovar 6a (strain ATCC BAA-680 / CLIP 11262).